Reading from the N-terminus, the 330-residue chain is Peroxidase N1 (330 aa).

An N-terminal signal peptide occupies residues Met-1 to Gly-29. Residue Gln-30 is modified to Pyrrolidone carboxylic acid. 4 disulfide bridges follow: Cys-41–Cys-117, Cys-74–Cys-79, Cys-123–Cys-326, and Cys-201–Cys-233. His-72 acts as the Proton acceptor in catalysis. The Ca(2+) site is built by Asp-73, Val-76, Gly-78, Asp-80, and Ser-82. Pro-164 lines the substrate pocket. Residue His-194 participates in heme b binding. Residue Thr-195 participates in Ca(2+) binding. Residue Asn-212 is glycosylated (N-linked (GlcNAc...) asparagine). 2 residues coordinate Ca(2+): Asp-246 and Asp-254.

Belongs to the peroxidase family. Classical plant (class III) peroxidase subfamily. Ca(2+) is required as a cofactor. Heme b serves as cofactor. As to expression, expressed at a high level in roots and at a trace level in lower leaves. Not expressed in upper leaves, stems, flowers, seeds and shoot apices.

The protein resides in the secreted. The catalysed reaction is 2 a phenolic donor + H2O2 = 2 a phenolic radical donor + 2 H2O. Removal of H(2)O(2), oxidation of toxic reductants, biosynthesis and degradation of lignin, suberization, auxin catabolism, response to environmental stresses such as wounding, pathogen attack and oxidative stress. These functions might be dependent on each isozyme/isoform in each plant tissue. Can use NADH, NADPH and monolignols as substrates. This chain is Peroxidase N1, found in Nicotiana tabacum (Common tobacco).